A 49-amino-acid chain; its full sequence is Large ribosomal subunit protein bL33 (49 aa).

Belongs to the bacterial ribosomal protein bL33 family.

In Pseudothermotoga lettingae (strain ATCC BAA-301 / DSM 14385 / NBRC 107922 / TMO) (Thermotoga lettingae), this protein is Large ribosomal subunit protein bL33.